We begin with the raw amino-acid sequence, 316 residues long: 4-hydroxy-3-methylbut-2-enyl diphosphate reductase (316 aa).

[4Fe-4S] cluster is bound at residue C12. The (2E)-4-hydroxy-3-methylbut-2-enyl diphosphate site is built by H41 and H74. Dimethylallyl diphosphate is bound by residues H41 and H74. H41 and H74 together coordinate isopentenyl diphosphate. [4Fe-4S] cluster is bound at residue C96. H124 serves as a coordination point for (2E)-4-hydroxy-3-methylbut-2-enyl diphosphate. Position 124 (H124) interacts with dimethylallyl diphosphate. Residue H124 participates in isopentenyl diphosphate binding. E126 functions as the Proton donor in the catalytic mechanism. T165 contacts (2E)-4-hydroxy-3-methylbut-2-enyl diphosphate. Residue C195 participates in [4Fe-4S] cluster binding. (2E)-4-hydroxy-3-methylbut-2-enyl diphosphate-binding residues include S223, S224, N225, and S267. 4 residues coordinate dimethylallyl diphosphate: S223, S224, N225, and S267. Residues S223, S224, N225, and S267 each coordinate isopentenyl diphosphate.

This sequence belongs to the IspH family. Requires [4Fe-4S] cluster as cofactor.

It carries out the reaction isopentenyl diphosphate + 2 oxidized [2Fe-2S]-[ferredoxin] + H2O = (2E)-4-hydroxy-3-methylbut-2-enyl diphosphate + 2 reduced [2Fe-2S]-[ferredoxin] + 2 H(+). The catalysed reaction is dimethylallyl diphosphate + 2 oxidized [2Fe-2S]-[ferredoxin] + H2O = (2E)-4-hydroxy-3-methylbut-2-enyl diphosphate + 2 reduced [2Fe-2S]-[ferredoxin] + 2 H(+). Its pathway is isoprenoid biosynthesis; dimethylallyl diphosphate biosynthesis; dimethylallyl diphosphate from (2E)-4-hydroxy-3-methylbutenyl diphosphate: step 1/1. It participates in isoprenoid biosynthesis; isopentenyl diphosphate biosynthesis via DXP pathway; isopentenyl diphosphate from 1-deoxy-D-xylulose 5-phosphate: step 6/6. Its function is as follows. Catalyzes the conversion of 1-hydroxy-2-methyl-2-(E)-butenyl 4-diphosphate (HMBPP) into a mixture of isopentenyl diphosphate (IPP) and dimethylallyl diphosphate (DMAPP). Acts in the terminal step of the DOXP/MEP pathway for isoprenoid precursor biosynthesis. The chain is 4-hydroxy-3-methylbut-2-enyl diphosphate reductase from Acidithiobacillus ferrooxidans (strain ATCC 53993 / BNL-5-31) (Leptospirillum ferrooxidans (ATCC 53993)).